The chain runs to 455 residues: Kynurenine--oxoglutarate transaminase 3 (455 aa).

Position 71 (Gly-71) interacts with substrate. Position 116 is an N6-acetyllysine; alternate (Lys-116). Residue Lys-116 is modified to N6-succinyllysine; alternate. Asn-218 serves as a coordination point for substrate. The residue at position 280 (Lys-280) is an N6-(pyridoxal phosphate)lysine. Arg-430 contributes to the substrate binding site.

It belongs to the class-I pyridoxal-phosphate-dependent aminotransferase family. In terms of assembly, homodimer. Pyridoxal 5'-phosphate serves as cofactor.

The enzyme catalyses L-kynurenine + 2-oxoglutarate = kynurenate + L-glutamate + H2O. It carries out the reaction L-kynurenine + glyoxylate = kynurenate + glycine + H2O. It catalyses the reaction 3-hydroxy-L-kynurenine + glyoxylate = xanthurenate + glycine + H2O. The catalysed reaction is an S-substituted L-cysteine + H2O = a thiol + pyruvate + NH4(+). Its pathway is amino-acid degradation; L-kynurenine degradation; kynurenate from L-kynurenine: step 1/2. Catalyzes the irreversible transamination of the L-tryptophan metabolite L-kynurenine to form kynurenic acid (KA), an intermediate in the tryptophan catabolic pathway which is also a broad spectrum antagonist of the three ionotropic excitatory amino acid receptors among others. May catalyze the beta-elimination of S-conjugates and Se-conjugates of L-(seleno)cysteine, resulting in the cleavage of the C-S or C-Se bond. Has transaminase activity towards L-kynurenine, tryptophan, phenylalanine, serine, cysteine, methionine, histidine, glutamine and asparagine with glyoxylate as an amino group acceptor (in vitro). Has lower activity with 2-oxoglutarate as amino group acceptor (in vitro). This Bos taurus (Bovine) protein is Kynurenine--oxoglutarate transaminase 3.